The chain runs to 284 residues: 2-dehydro-3-deoxyphosphooctonate aldolase (284 aa).

Belongs to the KdsA family.

It localises to the cytoplasm. It catalyses the reaction D-arabinose 5-phosphate + phosphoenolpyruvate + H2O = 3-deoxy-alpha-D-manno-2-octulosonate-8-phosphate + phosphate. It functions in the pathway carbohydrate biosynthesis; 3-deoxy-D-manno-octulosonate biosynthesis; 3-deoxy-D-manno-octulosonate from D-ribulose 5-phosphate: step 2/3. It participates in bacterial outer membrane biogenesis; lipopolysaccharide biosynthesis. The chain is 2-dehydro-3-deoxyphosphooctonate aldolase from Paraburkholderia phymatum (strain DSM 17167 / CIP 108236 / LMG 21445 / STM815) (Burkholderia phymatum).